We begin with the raw amino-acid sequence, 671 residues long: tRNA 5-methylaminomethyl-2-thiouridine biosynthesis bifunctional protein MnmC (671 aa).

Residues 1 to 245 (MVNVMNTLSF…KREMLWGEKP (245 aa)) are tRNA (mnm(5)s(2)U34)-methyltransferase. Residues 272–671 (VGGGVASLFV…RKLLKGSKVE (400 aa)) form an FAD-dependent cmnm(5)s(2)U34 oxidoreductase region.

This sequence in the N-terminal section; belongs to the methyltransferase superfamily. tRNA (mnm(5)s(2)U34)-methyltransferase family. The protein in the C-terminal section; belongs to the DAO family. FAD serves as cofactor.

It localises to the cytoplasm. It catalyses the reaction 5-aminomethyl-2-thiouridine(34) in tRNA + S-adenosyl-L-methionine = 5-methylaminomethyl-2-thiouridine(34) in tRNA + S-adenosyl-L-homocysteine + H(+). Functionally, catalyzes the last two steps in the biosynthesis of 5-methylaminomethyl-2-thiouridine (mnm(5)s(2)U) at the wobble position (U34) in tRNA. Catalyzes the FAD-dependent demodification of cmnm(5)s(2)U34 to nm(5)s(2)U34, followed by the transfer of a methyl group from S-adenosyl-L-methionine to nm(5)s(2)U34, to form mnm(5)s(2)U34. The protein is tRNA 5-methylaminomethyl-2-thiouridine biosynthesis bifunctional protein MnmC of Actinobacillus pleuropneumoniae serotype 5b (strain L20).